The sequence spans 312 residues: Ribosomal protein L11 methyltransferase (312 aa).

S-adenosyl-L-methionine contacts are provided by Thr-160, Gly-181, Asp-203, and Asn-246.

The protein belongs to the methyltransferase superfamily. PrmA family.

Its subcellular location is the cytoplasm. It catalyses the reaction L-lysyl-[protein] + 3 S-adenosyl-L-methionine = N(6),N(6),N(6)-trimethyl-L-lysyl-[protein] + 3 S-adenosyl-L-homocysteine + 3 H(+). Functionally, methylates ribosomal protein L11. The chain is Ribosomal protein L11 methyltransferase from Staphylococcus carnosus (strain TM300).